A 441-amino-acid polypeptide reads, in one-letter code: Damage-control phosphatase ARMT1 (441 aa).

Ala2 bears the N-acetylalanine mark. Lys40 carries the N6-acetyllysine modification. Position 102 is a phosphoserine (Ser102). Positions 253 and 254 each coordinate Mn(2+). 253-254 (DN) is a substrate binding site. Glu258 and Asp291 together coordinate S-adenosyl-L-methionine. Asp291 contributes to the Mn(2+) binding site. Residues 367 to 371 (DLNYR) and Lys404 contribute to the substrate site. A Subfamily III RTxK motif motif is present at residues 401-404 (RTLK).

This sequence belongs to the damage-control phosphatase family. Sugar phosphate phosphatase III subfamily. The cofactor is Mn(2+). It depends on Ni(2+) as a cofactor. In terms of processing, automethylated.

It catalyses the reaction beta-D-fructose 1-phosphate + H2O = D-fructose + phosphate. The enzyme catalyses beta-D-fructose 6-phosphate = dihydroxyacetone + D-glyceraldehyde 3-phosphate. The catalysed reaction is L-glutamyl-[protein] + S-adenosyl-L-methionine = [protein]-L-glutamate 5-O-methyl ester + S-adenosyl-L-homocysteine. In terms of biological role, metal-dependent phosphatase that shows phosphatase activity against several substrates, including fructose-1-phosphate and fructose-6-phosphate. Its preference for fructose-1-phosphate, a strong glycating agent that causes DNA damage rather than a canonical yeast metabolite, suggests a damage-control function in hexose phosphate metabolism. Has also been shown to have O-methyltransferase activity that methylates glutamate residues of target proteins to form gamma-glutamyl methyl ester residues. Possibly methylates PCNA, suggesting it is involved in the DNA damage response. The protein is Damage-control phosphatase ARMT1 of Homo sapiens (Human).